The primary structure comprises 217 residues: Large ribosomal subunit protein uL4 (217 aa).

A disordered region spans residues 42 to 100 (RAAARQGTHSTKTRGDVSGGGRKPYRQKGTGRARQGSTRAPQFTGGGVVHGPKPRDYSQ).

The protein belongs to the universal ribosomal protein uL4 family. In terms of assembly, part of the 50S ribosomal subunit.

One of the primary rRNA binding proteins, this protein initially binds near the 5'-end of the 23S rRNA. It is important during the early stages of 50S assembly. It makes multiple contacts with different domains of the 23S rRNA in the assembled 50S subunit and ribosome. Functionally, forms part of the polypeptide exit tunnel. The protein is Large ribosomal subunit protein uL4 of Mycobacterium avium (strain 104).